The sequence spans 798 residues: Disintegrin and metalloproteinase domain-containing protein B (798 aa).

An N-terminal signal peptide occupies residues 1-23; sequence MKAFSCLLAVIATAASLFQHVDA. The Extracellular portion of the chain corresponds to 24-706; the sequence is SHARDKLNNI…VSDWVSRHKP (683 aa). Residues asparagine 32, asparagine 226, asparagine 227, asparagine 313, and asparagine 407 are each glycosylated (N-linked (GlcNAc...) asparagine). Residues 271–510 enclose the Peptidase M12B domain; the sequence is KVALIGVVAD…RTILTNCLTT (240 aa). 3 disulfide bridges follow: cysteine 395/cysteine 495, cysteine 448/cysteine 459, and cysteine 580/cysteine 600. Histidine 431 is a binding site for Zn(2+). The active site involves glutamate 432. Positions 435 and 441 each coordinate Zn(2+). The region spanning 519-608 is the Disintegrin domain; sequence GQQCGNGIVE…DCPHDIHSKD (90 aa). The helical transmembrane segment at 707–727 threads the bilayer; sequence IVIGVAVGAGCLLLLAIASCI. Residues 728-798 are Cytoplasmic-facing; it reads CGRSRRQRPR…PGHMPPTRYA (71 aa). A disordered region spans residues 734–798; sequence QRPRNRKMPP…PGHMPPTRYA (65 aa). Residues 775 to 792 show a composition bias toward pro residues; sequence NNIPPPINAPPPAYPGHM.

The cofactor is Zn(2+).

It is found in the membrane. Functionally, probable zinc protease. The sequence is that of Disintegrin and metalloproteinase domain-containing protein B (ADM-B) from Trichophyton verrucosum (strain HKI 0517).